The chain runs to 1175 residues: Solute carrier family 9 member C1 (1175 aa).

Over 1–39 (MEMEEISENLTASHSIKLTNMWLELLKSVFLSTPQDLPE) the chain is Extracellular. Residues 40–59 (IILILSLICTVGAFLNMHLK) form a helical membrane-spanning segment. At 60 to 64 (DFPIP) the chain is on the cytoplasmic side. A helical transmembrane segment spans residues 65 to 82 (LPVILFLIGCCFEILSFA). The Extracellular segment spans residues 83-98 (STQIQIYADAIQWMDP). The helical transmembrane segment at 99 to 115 (DIFFGIFTPVIIFNVAF) threads the bilayer. Residues 116–125 (DMDIYMLQKL) lie on the Cytoplasmic side of the membrane. A helical transmembrane segment spans residues 126-151 (FWQILVITIPGFLINYTLILWYLQSV). The segment at 126-213 (FWQILVITIP…SLVIYSGVVH (88 aa)) is transport core domain. The Extracellular segment spans residues 152 to 157 (NKLSLK). Residues 158–183 (TVPWLLFSAVLISSDPMLTSASIRDL) form a helical membrane-spanning segment. The Cytoplasmic portion of the chain corresponds to 184–186 (GLS). The helical transmembrane segment at 187–212 (RSLTNLINGESLLTSVLSLVIYSGVV) threads the bilayer. Over 213 to 225 (HIRFKSKSVNHTL) the chain is Extracellular. A helical membrane pass occupies residues 226–257 (AHKVMSTAWSYIVESFITGIVFTKVIQLWMAT). At 258 to 261 (IFGD) the chain is on the cytoplasmic side. The helical transmembrane segment at 262–283 (DVNHITLIFSVLYLIFYVCELV) threads the bilayer. Topologically, residues 284–286 (GMS) are extracellular. The helical transmembrane segment at 287-300 (GIFTLATIGLFLNS) threads the bilayer. Over 301 to 307 (TSFKPGV) the chain is Cytoplasmic. Residues 308–339 (EAFLLEFWNCLSFIGFLMVFTFIGLLIPAHTY) form a helical membrane-spanning segment. At 340–344 (LHISF) the chain is on the extracellular side. Residues 345 to 374 (SDVYYSLNIYFTLIVLRLLVFLLMSPILSR) form a helical membrane-spanning segment. Residues 345-446 (SDVYYSLNIY…FILPMAVTKL (102 aa)) form a transport core domain region. The Cytoplasmic portion of the chain corresponds to 375-380 (LGHGFS). The chain crosses the membrane as a helical span at residues 381–411 (WRWAFIMVWSEMKGTPNINMALLLAYSDISL). At 412-415 (GSER) the chain is on the extracellular side. A helical transmembrane segment spans residues 416-446 (ERSQILFHGVSVCVITLIVNRFILPMAVTKL). Residues 447 to 632 (GLRDVTSTKY…ACHRIVFTNE (186 aa)) lie on the Cytoplasmic side of the membrane. Residues 618–698 (YMFLHACHRI…EFFSHTWLLF (81 aa)) form an ion transport-like region. Residues 633 to 653 (FEYTGYLVVLMSTYPMIICWI) traverse the membrane as a helical segment. Residues 654–657 (SRLK) lie on the Extracellular side of the membrane. Residues 658-684 (DIYDNEIKCANYYFLAFYILEALLKVA) form a helical membrane-spanning segment. Over 685-691 (AMRKEFF) the chain is Cytoplasmic. Residues 692-716 (SHTWLLFELGITLVGVLDIILIETD) traverse the membrane as a helical segment. Topologically, residues 717–724 (SISYNFDL) are extracellular. A helical transmembrane segment spans residues 725-751 (TETVVFMNVIRLLRILRILKLVTPKLL). The Cytoplasmic portion of the chain corresponds to 752 to 1175 (QIIDKRMSQQ…EELIEENINI (424 aa)). Over residues 1137–1146 (MKPDSERESF) the composition is skewed to basic and acidic residues. Residues 1137 to 1175 (MKPDSERESFETLDETSEEDNGKKENQENEELIEENINI) form a disordered region. Residues 1164 to 1175 (ENEELIEENINI) are compositionally biased toward acidic residues.

The protein belongs to the monovalent cation:proton antiporter 1 (CPA1) transporter (TC 2.A.36) family. As to quaternary structure, interacts with soluble adenylyl cyclase (sAC). Testis-specific. Specifically present in the principal piece of sperm tail (at protein level).

It is found in the cell projection. It localises to the cilium. The protein localises to the flagellum membrane. Sperm-specific solute carrier involved in intracellular pH regulation of spermatozoa. Required for sperm motility and fertility. Involved in sperm cell hyperactivation, a step needed for sperm motility which is essential late in the preparation of sperm for fertilization. Required for the expression and bicarbonate regulation of the soluble adenylyl cyclase (sAC). In Mus musculus (Mouse), this protein is Solute carrier family 9 member C1 (Slc9c1).